A 605-amino-acid polypeptide reads, in one-letter code: Elongation factor 4 (605 aa).

Residues 4 to 186 (SSVRNFCIIA…AIVNKVPAPK (183 aa)) form the tr-type G domain. Residues 16–21 (DHGKST) and 133–136 (NKID) contribute to the GTP site.

Belongs to the TRAFAC class translation factor GTPase superfamily. Classic translation factor GTPase family. LepA subfamily.

Its subcellular location is the cell membrane. The enzyme catalyses GTP + H2O = GDP + phosphate + H(+). Its function is as follows. Required for accurate and efficient protein synthesis under certain stress conditions. May act as a fidelity factor of the translation reaction, by catalyzing a one-codon backward translocation of tRNAs on improperly translocated ribosomes. Back-translocation proceeds from a post-translocation (POST) complex to a pre-translocation (PRE) complex, thus giving elongation factor G a second chance to translocate the tRNAs correctly. Binds to ribosomes in a GTP-dependent manner. This is Elongation factor 4 from Dehalococcoides mccartyi (strain ATCC BAA-2100 / JCM 16839 / KCTC 5957 / BAV1).